A 297-amino-acid chain; its full sequence is Probable endonuclease 4 (297 aa).

Residues histidine 69, histidine 110, glutamate 145, aspartate 179, histidine 182, histidine 214, aspartate 227, histidine 229, and glutamate 259 each coordinate Zn(2+).

This sequence belongs to the AP endonuclease 2 family. Requires Zn(2+) as cofactor.

The catalysed reaction is Endonucleolytic cleavage to 5'-phosphooligonucleotide end-products.. In terms of biological role, endonuclease IV plays a role in DNA repair. It cleaves phosphodiester bonds at apurinic or apyrimidinic (AP) sites, generating a 3'-hydroxyl group and a 5'-terminal sugar phosphate. This is Probable endonuclease 4 from Bacillus licheniformis (strain ATCC 14580 / DSM 13 / JCM 2505 / CCUG 7422 / NBRC 12200 / NCIMB 9375 / NCTC 10341 / NRRL NRS-1264 / Gibson 46).